The sequence spans 224 residues: Ribose-5-phosphate isomerase A 1 (224 aa).

Substrate contacts are provided by residues S29–T32, D85–D88, and K98–G101. E107 functions as the Proton acceptor in the catalytic mechanism. K125 contacts substrate.

Belongs to the ribose 5-phosphate isomerase family. In terms of assembly, homodimer.

The enzyme catalyses aldehydo-D-ribose 5-phosphate = D-ribulose 5-phosphate. Its pathway is carbohydrate degradation; pentose phosphate pathway; D-ribose 5-phosphate from D-ribulose 5-phosphate (non-oxidative stage): step 1/1. Catalyzes the reversible conversion of ribose-5-phosphate to ribulose 5-phosphate. This chain is Ribose-5-phosphate isomerase A 1, found in Oceanobacillus iheyensis (strain DSM 14371 / CIP 107618 / JCM 11309 / KCTC 3954 / HTE831).